The sequence spans 142 residues: UPF0102 protein Bcep1808_0248 (142 aa).

Belongs to the UPF0102 family.

In Burkholderia vietnamiensis (strain G4 / LMG 22486) (Burkholderia cepacia (strain R1808)), this protein is UPF0102 protein Bcep1808_0248.